Here is a 141-residue protein sequence, read N- to C-terminus: 6,7-dimethyl-8-ribityllumazine synthase (141 aa).

5-amino-6-(D-ribitylamino)uracil-binding positions include Phe13, 45–47 (SFE), and 69–71 (AII). Residue 74–75 (DT) coordinates (2S)-2-hydroxy-3-oxobutyl phosphate. The active-site Proton donor is the His77. Residue Leu102 participates in 5-amino-6-(D-ribitylamino)uracil binding. Arg117 contacts (2S)-2-hydroxy-3-oxobutyl phosphate.

Belongs to the DMRL synthase family.

The enzyme catalyses (2S)-2-hydroxy-3-oxobutyl phosphate + 5-amino-6-(D-ribitylamino)uracil = 6,7-dimethyl-8-(1-D-ribityl)lumazine + phosphate + 2 H2O + H(+). The protein operates within cofactor biosynthesis; riboflavin biosynthesis; riboflavin from 2-hydroxy-3-oxobutyl phosphate and 5-amino-6-(D-ribitylamino)uracil: step 1/2. Functionally, catalyzes the formation of 6,7-dimethyl-8-ribityllumazine by condensation of 5-amino-6-(D-ribitylamino)uracil with 3,4-dihydroxy-2-butanone 4-phosphate. This is the penultimate step in the biosynthesis of riboflavin. The sequence is that of 6,7-dimethyl-8-ribityllumazine synthase from Methanopyrus kandleri (strain AV19 / DSM 6324 / JCM 9639 / NBRC 100938).